The primary structure comprises 607 residues: Replication factor C large subunit (607 aa).

55 to 62 contacts ATP; sequence GPAGIGKT. Positions 468–607 are disordered; the sequence is EEEKPQKEGS…PKNQKTLFDF (140 aa). Over residues 506 to 518 the composition is skewed to basic and acidic residues; that stretch reads TSEKKENSEKKEN. A compositionally biased stretch (polar residues) spans 548-558; sequence SESVEQKTSSK.

Belongs to the activator 1 small subunits family. RfcL subfamily. Heteromultimer composed of small subunits (RfcS) and large subunits (RfcL).

Functionally, part of the RFC clamp loader complex which loads the PCNA sliding clamp onto DNA. The polypeptide is Replication factor C large subunit (Methanosarcina acetivorans (strain ATCC 35395 / DSM 2834 / JCM 12185 / C2A)).